The following is a 509-amino-acid chain: Photosystem II CP47 reaction center protein (509 aa).

A run of 6 helical transmembrane segments spans residues 21 to 36 (SVHI…WAGS), 101 to 115 (IVFS…IWHW), 140 to 156 (GIHL…FGAF), 203 to 218 (IAAG…FHLS), 237 to 252 (VLSS…AFVV), and 457 to 472 (SFAL…HGAR).

The protein belongs to the PsbB/PsbC family. PsbB subfamily. In terms of assembly, PSII is composed of 1 copy each of membrane proteins PsbA, PsbB, PsbC, PsbD, PsbE, PsbF, PsbH, PsbI, PsbJ, PsbK, PsbL, PsbM, PsbT, PsbX, PsbY, PsbZ, Psb30/Ycf12, at least 3 peripheral proteins of the oxygen-evolving complex and a large number of cofactors. It forms dimeric complexes. The cofactor is Binds multiple chlorophylls. PSII binds additional chlorophylls, carotenoids and specific lipids..

Its subcellular location is the plastid. It is found in the chloroplast thylakoid membrane. Functionally, one of the components of the core complex of photosystem II (PSII). It binds chlorophyll and helps catalyze the primary light-induced photochemical processes of PSII. PSII is a light-driven water:plastoquinone oxidoreductase, using light energy to abstract electrons from H(2)O, generating O(2) and a proton gradient subsequently used for ATP formation. The polypeptide is Photosystem II CP47 reaction center protein (Cicer arietinum (Chickpea)).